The sequence spans 418 residues: Type II methyltransferase M.MspI (418 aa).

Residues 105-404 enclose the SAM-dependent MTase C5-type domain; it reads FKFIDLFSGI…EQISLALKTV (300 aa). Cysteine 174 is an active-site residue.

The protein belongs to the class I-like SAM-binding methyltransferase superfamily. C5-methyltransferase family.

The catalysed reaction is a 2'-deoxycytidine in DNA + S-adenosyl-L-methionine = a 5-methyl-2'-deoxycytidine in DNA + S-adenosyl-L-homocysteine + H(+). A methylase, recognizes the double-stranded sequence 5'-CCGG-3', methylates C-1 on both strands, and protects the DNA from cleavage by the MspI endonuclease. This Moraxella sp protein is Type II methyltransferase M.MspI (mspIM).